Reading from the N-terminus, the 323-residue chain is Ig gamma chain C region (323 aa).

3 Ig-like domains span residues 6 to 96, 114 to 213, and 222 to 318; these read PSVF…KTVA, PSVF…KTIS, and PKVY…KSIS.

The sequence is that of Ig gamma chain C region from Oryctolagus cuniculus (Rabbit).